A 204-amino-acid chain; its full sequence is Carbon disulfide hydrolase (204 aa).

Residues Cys-35, His-88, and Cys-91 each contribute to the Zn(2+) site.

Belongs to the beta-class carbonic anhydrase family. As to quaternary structure, forms a hexadecameric catenane homooligomer, through interactions of two interlocked octameric rings. Exists as both octamers and hexadecamers in solution. Zn(2+) is required as a cofactor.

It carries out the reaction carbon disulfide + 2 H2O = 2 hydrogen sulfide + CO2 + 2 H(+). The protein operates within sulfur metabolism; hydrogen sulfide biosynthesis. Functionally, catalyzes the conversion of carbon disulfide into hydrogen sulfide and carbon dioxide, with carbonyl sulfide as an intermediate. Likely plays a key role in sulfur metabolism that allows Acidianus sp. A1-3 to grow on carbon disulfide as the main carbon and energy source. Does not show carbonic anhydrase activity (hydration of CO(2) to carbonate). The sequence is that of Carbon disulfide hydrolase from Acidianus sp. (strain A1-3).